Consider the following 306-residue polypeptide: Dermonecrotic toxin LarSicTox-alphaIB1ai (306 aa).

V1 is a signal peptide. The propeptide occupies 2 to 27 (RATEKFASMYFFCHSPQSAETDVAER). H38 is an active-site residue. Mg(2+) is bound by residues E58 and D60. H74 acts as the Nucleophile in catalysis. 2 disulfides stabilise this stretch: C78–C84 and C80–C223. A Mg(2+)-binding site is contributed by D118. The N-linked (GlcNAc...) asparagine glycan is linked to N283.

Belongs to the arthropod phospholipase D family. Class II subfamily. Mg(2+) is required as a cofactor. As to expression, expressed by the venom gland.

Its subcellular location is the secreted. The enzyme catalyses an N-(acyl)-sphingosylphosphocholine = an N-(acyl)-sphingosyl-1,3-cyclic phosphate + choline. It carries out the reaction an N-(acyl)-sphingosylphosphoethanolamine = an N-(acyl)-sphingosyl-1,3-cyclic phosphate + ethanolamine. It catalyses the reaction a 1-acyl-sn-glycero-3-phosphocholine = a 1-acyl-sn-glycero-2,3-cyclic phosphate + choline. The catalysed reaction is a 1-acyl-sn-glycero-3-phosphoethanolamine = a 1-acyl-sn-glycero-2,3-cyclic phosphate + ethanolamine. Its function is as follows. Dermonecrotic toxins cleave the phosphodiester linkage between the phosphate and headgroup of certain phospholipids (sphingolipid and lysolipid substrates), forming an alcohol (often choline) and a cyclic phosphate. This toxin acts on sphingomyelin (SM). It may also act on ceramide phosphoethanolamine (CPE), lysophosphatidylcholine (LPC) and lysophosphatidylethanolamine (LPE), but not on lysophosphatidylserine (LPS), and lysophosphatidylglycerol (LPG). It acts by transphosphatidylation, releasing exclusively cyclic phosphate products as second products. Induces dermonecrosis, hemolysis, increased vascular permeability, edema, inflammatory response, and platelet aggregation. This chain is Dermonecrotic toxin LarSicTox-alphaIB1ai, found in Loxosceles arizonica (Arizona brown spider).